An 860-amino-acid chain; its full sequence is DNA mismatch repair protein MutS (860 aa).

ATP is bound at residue 625 to 632 (GPNMGGKS).

It belongs to the DNA mismatch repair MutS family.

This protein is involved in the repair of mismatches in DNA. It is possible that it carries out the mismatch recognition step. This protein has a weak ATPase activity. This is DNA mismatch repair protein MutS from Aeromonas hydrophila subsp. hydrophila (strain ATCC 7966 / DSM 30187 / BCRC 13018 / CCUG 14551 / JCM 1027 / KCTC 2358 / NCIMB 9240 / NCTC 8049).